The chain runs to 634 residues: E3 ubiquitin/ISG15 ligase TRIM25 (634 aa).

An RING-type zinc finger spans residues 13–54 (CSVCLELFKEPVTTPCGHNFCMSCLDETWVVQGPPYRCPQCR). At Thr-90 the chain carries Phosphothreonine. Ser-99 carries the post-translational modification Phosphoserine. A Glycyl lysine isopeptide (Lys-Gly) (interchain with G-Cter in ISG15) cross-link involves residue Lys-116. Residues 215–305 (ATKALEDVRS…LIMDKGDEFE (91 aa)) are a coiled coil. Position 272 is an N6-acetyllysine (Lys-272). Tyr-277 is modified (phosphotyrosine). The disordered stretch occupies residues 353–437 (KLQKKSEEHN…APKASAAQPD (85 aa)). Over residues 363–376 (GSGNKGDQTQSTFK) the composition is skewed to polar residues. Residues 444 to 634 (KVLENFLTKS…AGTTLSICSK (191 aa)) enclose the B30.2/SPRY domain. An N6-acetyllysine modification is found at Lys-572.

Forms homodimers. Interacts (via SPRY domain) with RIGI (via CARD domain). Interacts with ZFHX3. Interacts with NLRP12; this interaction reduces the E3 ubiquitin ligase TRIM25-mediated 'Lys-63'-linked RIGI activation. Interacts with the KHDC3L/FILIA-OOEP/FLOPED scaffold complex and BLM at DNA replication forks. Interacts with RTN3; this interaction prevents RIGI ubiquitination. Interacts with YWHAE. Post-translationally, auto-ISGylated. In terms of tissue distribution, ubiquitous.

The protein localises to the cytoplasm. Its subcellular location is the stress granule. The protein resides in the nucleus. It carries out the reaction S-ubiquitinyl-[E2 ubiquitin-conjugating enzyme]-L-cysteine + [acceptor protein]-L-lysine = [E2 ubiquitin-conjugating enzyme]-L-cysteine + N(6)-ubiquitinyl-[acceptor protein]-L-lysine.. The enzyme catalyses ATP + [ISG15] + [protein]-lysine = AMP + diphosphate + [protein]-N-ISGyllysine.. It functions in the pathway protein modification; protein ubiquitination. Its function is as follows. Functions as a ubiquitin E3 ligase and as an ISG15 E3 ligase. Involved in innate immune defense against viruses by mediating ubiquitination of RIGI and IFIH1. Mediates 'Lys-63'-linked polyubiquitination of the RIGI N-terminal CARD-like region and may play a role in signal transduction that leads to the production of interferons in response to viral infection. Mediates 'Lys-63'-linked polyubiquitination of IFIH1. Promotes ISGylation of 14-3-3 sigma (SFN), an adapter protein implicated in the regulation of a large spectrum signaling pathway. Mediates estrogen action in various target organs. Mediates the ubiquitination and subsequent proteasomal degradation of ZFHX3. Plays a role in promoting the restart of stalled replication forks via interaction with the KHDC3L-OOEP scaffold and subsequent ubiquitination of BLM, resulting in the recruitment and retainment of BLM at DNA replication forks. Plays an essential role in the antiviral activity of ZAP/ZC3HAV1; an antiviral protein which inhibits the replication of certain viruses. Mechanistically, mediates 'Lys-63'-linked polyubiquitination of ZAP/ZC3HAV1 that is required for its optimal binding to target mRNA. Also mediates the ubiquitination of various substrates implicated in stress granule formation, nonsense-mediated mRNA decay, nucleoside synthesis and mRNA translation and stability. In Mus musculus (Mouse), this protein is E3 ubiquitin/ISG15 ligase TRIM25 (Trim25).